The following is a 396-amino-acid chain: Ornithine aminotransferase (396 aa).

N6-(pyridoxal phosphate)lysine is present on Lys255.

This sequence belongs to the class-III pyridoxal-phosphate-dependent aminotransferase family. OAT subfamily. Requires pyridoxal 5'-phosphate as cofactor.

The protein localises to the cytoplasm. It carries out the reaction a 2-oxocarboxylate + L-ornithine = L-glutamate 5-semialdehyde + an L-alpha-amino acid. It functions in the pathway amino-acid biosynthesis; L-proline biosynthesis; L-glutamate 5-semialdehyde from L-ornithine: step 1/1. Functionally, catalyzes the interconversion of ornithine to glutamate semialdehyde. The chain is Ornithine aminotransferase from Bacillus anthracis (strain A0248).